A 241-amino-acid polypeptide reads, in one-letter code: DnaA regulatory inactivator Hda (241 aa).

Belongs to the DnaA family. HdA subfamily. In terms of assembly, the active form seems to be an ADP-bound monomer. Forms the RIDA complex (regulatory inactivation of DnaA) of ATP-DnaA, ADP-Hda and the DNA-loaded beta sliding clamp (dnaN).

Functionally, mediates the interaction of DNA replication initiator protein DnaA with DNA polymerase subunit beta sliding clamp (dnaN). Stimulates hydrolysis of ATP-DnaA to ADP-DnaA, rendering DnaA inactive for reinitiation, a process called regulatory inhibition of DnaA or RIDA. This Salmonella arizonae (strain ATCC BAA-731 / CDC346-86 / RSK2980) protein is DnaA regulatory inactivator Hda.